Reading from the N-terminus, the 217-residue chain is Uridylate kinase (217 aa).

5-9 (KLTGR) lines the ATP pocket. G37 contacts UMP. G38 and R42 together coordinate ATP. Residues D59 and 107-113 (FQPGQST) each bind UMP. N134, Y139, and D142 together coordinate ATP.

Belongs to the UMP kinase family. Homohexamer.

Its subcellular location is the cytoplasm. It carries out the reaction UMP + ATP = UDP + ADP. Its pathway is pyrimidine metabolism; CTP biosynthesis via de novo pathway; UDP from UMP (UMPK route): step 1/1. With respect to regulation, inhibited by UTP. Catalyzes the reversible phosphorylation of UMP to UDP. The chain is Uridylate kinase from Pyrobaculum calidifontis (strain DSM 21063 / JCM 11548 / VA1).